The primary structure comprises 424 residues: Tubulin-specific chaperone cofactor E-like protein (424 aa).

Phosphoserine is present on residues Ser18 and Ser41. 7 LRR repeats span residues 73-98 (CAHV…IVSN), 99-123 (VPQL…TCAG), 124-147 (SFSG…HMIL), 150-172 (LPDL…PSIC), 173-197 (CHSL…KLGV), 199-224 (FPSL…SLAR), and 226-250 (FPNL…KLNS). In terms of domain architecture, LRRCT spans 262 to 303 (IPLLQPYTTEERRKLVIARLPSVSKLNGSVVTDGEREDSERF). The Ubiquitin-like domain maps to 334-424 (AEVDLRPQSS…DKIYVESKTK (91 aa)). Residues 349–375 (HFNDQVEEMSIRLDQTVAELKKQLKTL) are a coiled coil.

In terms of tissue distribution, abundantly expressed in testis, but is also present in several tissues at a much lower level.

The protein localises to the cytoplasm. It localises to the cytoskeleton. In terms of biological role, acts as a regulator of tubulin stability. The polypeptide is Tubulin-specific chaperone cofactor E-like protein (TBCEL) (Homo sapiens (Human)).